The chain runs to 319 residues: Ester hydrolase C11orf54 homolog (319 aa).

Positions 270, 272, and 282 each coordinate Zn(2+).

Monomer. Zn(2+) serves as cofactor.

Its subcellular location is the nucleus. It is found in the cytoplasm. In terms of biological role, exhibits ester hydrolase activity on the substrate p-nitrophenyl acetate, in vitro. May regulate DNA damage and repair by regulating HIF1A degradation via chaperone-mediated autophagy (CMA). This is Ester hydrolase C11orf54 homolog from Danio rerio (Zebrafish).